A 604-amino-acid chain; its full sequence is Siderophore iron transporter mirB (604 aa).

A disordered region spans residues 1–61; it reads MTIGSKFSLL…DNSSDEALPS (61 aa). 14 helical membrane passes run 73–95, 115–137, 149–168, 178–200, 207–224, 237–259, 289–311, 326–343, 363–385, 400–422, 427–449, 454–476, 489–511, and 566–588; these read AVTLVWSKWSLVAVFCLLWLVTL, FQSHSLLTVINIVSSAMVSALYI, AEGWLVMVGLSTLGLIMMAA, ADVFYSVGFAGMNYILCVLAADI, GIAFAFTSSPYMITAFAG, WRWGFGAFAIIFPFVASPVYFVL, YFFAFDIPGVILLAGGLTVFLLP, YIIAMIVTGFVVMVLFVL, TVLGACLIDATYQMSYYCWNSYF, AGYVGSTFQVVSGVLLFMVGFAI, YFRWLLFIGVPLYIFAQGLMIHF, QYIGYIVMCEIFISIGGSIFVLL, YVAAALAVLFISGGIGGAVGNAI, and AQARMLAAGTGLMALMFIWMFMV.

It belongs to the major facilitator superfamily.

Its subcellular location is the membrane. Its function is as follows. Involved in the transport of siderophore triacestylfusarinine C and so has a role in iron homeostasis. The chain is Siderophore iron transporter mirB (mirB) from Emericella nidulans (strain FGSC A4 / ATCC 38163 / CBS 112.46 / NRRL 194 / M139) (Aspergillus nidulans).